A 229-amino-acid polypeptide reads, in one-letter code: Cytochrome c oxidase subunit 2 (229 aa).

Topologically, residues 1–14 (MAQQAQLGLQDAAS) are mitochondrial intermembrane. Residues 15–45 (PIMEELIHFHDHTLTVVFLISVLIFYLIIVM) form a helical membrane-spanning segment. Topologically, residues 46 to 59 (VTTTFMNKHSLDSQ) are mitochondrial matrix. Residues 60–87 (EVEIVWTVMPAIVLITIALPSLRILYLT) form a helical membrane-spanning segment. Residues 88-229 (DEISNPHLTI…ENWTTKVLAS (142 aa)) are Mitochondrial intermembrane-facing. Positions 161, 196, 198, 200, 204, and 207 each coordinate Cu cation. Glutamate 198 lines the Mg(2+) pocket.

It belongs to the cytochrome c oxidase subunit 2 family. In terms of assembly, component of the cytochrome c oxidase (complex IV, CIV), a multisubunit enzyme composed of 14 subunits. The complex is composed of a catalytic core of 3 subunits MT-CO1, MT-CO2 and MT-CO3, encoded in the mitochondrial DNA, and 11 supernumerary subunits COX4I, COX5A, COX5B, COX6A, COX6B, COX6C, COX7A, COX7B, COX7C, COX8 and NDUFA4, which are encoded in the nuclear genome. The complex exists as a monomer or a dimer and forms supercomplexes (SCs) in the inner mitochondrial membrane with NADH-ubiquinone oxidoreductase (complex I, CI) and ubiquinol-cytochrome c oxidoreductase (cytochrome b-c1 complex, complex III, CIII), resulting in different assemblies (supercomplex SCI(1)III(2)IV(1) and megacomplex MCI(2)III(2)IV(2)). Found in a complex with TMEM177, COA6, COX18, COX20, SCO1 and SCO2. Interacts with TMEM177 in a COX20-dependent manner. Interacts with COX20. Interacts with COX16. Requires Cu cation as cofactor.

It is found in the mitochondrion inner membrane. The catalysed reaction is 4 Fe(II)-[cytochrome c] + O2 + 8 H(+)(in) = 4 Fe(III)-[cytochrome c] + 2 H2O + 4 H(+)(out). Its function is as follows. Component of the cytochrome c oxidase, the last enzyme in the mitochondrial electron transport chain which drives oxidative phosphorylation. The respiratory chain contains 3 multisubunit complexes succinate dehydrogenase (complex II, CII), ubiquinol-cytochrome c oxidoreductase (cytochrome b-c1 complex, complex III, CIII) and cytochrome c oxidase (complex IV, CIV), that cooperate to transfer electrons derived from NADH and succinate to molecular oxygen, creating an electrochemical gradient over the inner membrane that drives transmembrane transport and the ATP synthase. Cytochrome c oxidase is the component of the respiratory chain that catalyzes the reduction of oxygen to water. Electrons originating from reduced cytochrome c in the intermembrane space (IMS) are transferred via the dinuclear copper A center (CU(A)) of subunit 2 and heme A of subunit 1 to the active site in subunit 1, a binuclear center (BNC) formed by heme A3 and copper B (CU(B)). The BNC reduces molecular oxygen to 2 water molecules using 4 electrons from cytochrome c in the IMS and 4 protons from the mitochondrial matrix. In Petromyzon marinus (Sea lamprey), this protein is Cytochrome c oxidase subunit 2 (MT-CO2).